The chain runs to 117 residues: Small ribosomal subunit protein uS8c (117 aa).

Belongs to the universal ribosomal protein uS8 family. As to quaternary structure, part of the 30S ribosomal subunit.

The protein localises to the plastid. The protein resides in the chloroplast. Its function is as follows. One of the primary rRNA binding proteins, it binds directly to 16S rRNA central domain where it helps coordinate assembly of the platform of the 30S subunit. In Cyanidioschyzon merolae (strain NIES-3377 / 10D) (Unicellular red alga), this protein is Small ribosomal subunit protein uS8c (rps8).